The primary structure comprises 547 residues: Elongator complex protein 3 (547 aa).

The 291-residue stretch at Arg-82–Pro-372 folds into the Radical SAM core domain. Residues Cys-99, Cys-109, and Cys-112 each contribute to the [4Fe-4S] cluster site. Phosphoserine is present on Ser-161. Lys-164 contacts acetyl-CoA. Tyr-202 is modified (phosphotyrosine). The residue at position 229 (Lys-229) is an N6-methyllysine. Residue Tyr-251 is modified to Phosphotyrosine. Residues Ile-396–Glu-547 enclose the N-acetyltransferase domain. Acetyl-CoA is bound by residues Glu-474–Val-477, Phe-497–Met-499, and Tyr-530.

Belongs to the ELP3 family. In terms of assembly, component of the elongator complex which consists of ELP1, ELP2, ELP3, ELP4, ELP5 and ELP6. ELP1, ELP2 and ELP3 form the elongator core complex. Interacts with alpha-tubulin. The cofactor is [4Fe-4S] cluster. Tyrosine-phosphorylated; phosphorylation on Tyr-202 does not affect elongator complex integrity or ELP3 protein stability. Also serine/threonine-phosphorylated.

The protein resides in the cytoplasm. It is found in the nucleus. The enzyme catalyses uridine(34) in tRNA + acetyl-CoA + S-adenosyl-L-methionine + H2O = 5-(carboxymethyl)uridine(34) in tRNA + 5'-deoxyadenosine + L-methionine + CoA + 2 H(+). Its pathway is tRNA modification; 5-methoxycarbonylmethyl-2-thiouridine-tRNA biosynthesis. In terms of biological role, catalytic tRNA acetyltransferase subunit of the elongator complex which is required for multiple tRNA modifications, including mcm5U (5-methoxycarbonylmethyl uridine), mcm5s2U (5-methoxycarbonylmethyl-2-thiouridine), and ncm5U (5-carbamoylmethyl uridine). In the elongator complex, acts as a tRNA uridine(34) acetyltransferase by mediating formation of carboxymethyluridine in the wobble base at position 34 in tRNAs. May also act as a protein lysine acetyltransferase by mediating acetylation of target proteins; such activity is however unclear in vivo and recent evidences suggest that ELP3 primarily acts as a tRNA acetyltransferase. Involved in neurogenesis: regulates the migration and branching of projection neurons in the developing cerebral cortex, through a process depending on alpha-tubulin acetylation. Required for acetylation of GJA1 in the developing cerebral cortex. This chain is Elongator complex protein 3, found in Bos taurus (Bovine).